The chain runs to 339 residues: 1-aminocyclopropane-1-carboxylate deaminase (339 aa).

An N6-(pyridoxal phosphate)lysine modification is found at K52. S79 (nucleophile) is an active-site residue.

It belongs to the ACC deaminase/D-cysteine desulfhydrase family. In terms of assembly, homotrimer. The cofactor is pyridoxal 5'-phosphate.

The enzyme catalyses 1-aminocyclopropane-1-carboxylate + H2O = 2-oxobutanoate + NH4(+). Its function is as follows. Catalyzes a cyclopropane ring-opening reaction, the irreversible conversion of 1-aminocyclopropane-1-carboxylate (ACC) to ammonia and alpha-ketobutyrate. Allows growth on ACC as a nitrogen source. This Bradyrhizobium sp. (strain BTAi1 / ATCC BAA-1182) protein is 1-aminocyclopropane-1-carboxylate deaminase.